Reading from the N-terminus, the 257-residue chain is Undecaprenyl-diphosphatase (257 aa).

Helical transmembrane passes span leucine 4–serine 24, histidine 51–phenylalanine 71, leucine 78–isoleucine 98, leucine 106–glycine 126, isoleucine 133–valine 153, alanine 171–leucine 191, leucine 207–leucine 227, and leucine 235–phenylalanine 255.

The protein belongs to the UppP family.

The protein localises to the cell inner membrane. The catalysed reaction is di-trans,octa-cis-undecaprenyl diphosphate + H2O = di-trans,octa-cis-undecaprenyl phosphate + phosphate + H(+). In terms of biological role, catalyzes the dephosphorylation of undecaprenyl diphosphate (UPP). Confers resistance to bacitracin. The sequence is that of Undecaprenyl-diphosphatase from Thermodesulfovibrio yellowstonii (strain ATCC 51303 / DSM 11347 / YP87).